The following is a 321-amino-acid chain: Ribosomal RNA small subunit methyltransferase H (321 aa).

S-adenosyl-L-methionine-binding positions include 34-36 (GGH), aspartate 54, phenylalanine 80, aspartate 102, and glutamine 109.

Belongs to the methyltransferase superfamily. RsmH family.

It localises to the cytoplasm. The catalysed reaction is cytidine(1402) in 16S rRNA + S-adenosyl-L-methionine = N(4)-methylcytidine(1402) in 16S rRNA + S-adenosyl-L-homocysteine + H(+). Functionally, specifically methylates the N4 position of cytidine in position 1402 (C1402) of 16S rRNA. This chain is Ribosomal RNA small subunit methyltransferase H, found in Blochmanniella floridana.